Reading from the N-terminus, the 750-residue chain is Serine/threonine-protein kinase GE16371 (750 aa).

2 consecutive Doublecortin domains span residues Leu-159 to Asn-245 and Arg-315 to Phe-398. The Protein kinase domain maps to Tyr-479–Thr-737. ATP-binding positions include Ile-485–Val-493 and Lys-508. The Proton acceptor role is filled by Asp-600.

The protein belongs to the protein kinase superfamily. CAMK Ser/Thr protein kinase family. CaMK subfamily.

The enzyme catalyses L-seryl-[protein] + ATP = O-phospho-L-seryl-[protein] + ADP + H(+). It catalyses the reaction L-threonyl-[protein] + ATP = O-phospho-L-threonyl-[protein] + ADP + H(+). This is Serine/threonine-protein kinase GE16371 from Drosophila yakuba (Fruit fly).